The following is a 509-amino-acid chain: Dihydrolipoyl dehydrogenase, mitochondrial (509 aa).

A mitochondrion-targeting transit peptide spans 1–35 (MQSWSRVYRSLAKKGHFNRISHGLQGVSSVPLRTY). Lysine 66 bears the N6-acetyllysine; alternate mark. Lysine 66 carries the N6-succinyllysine; alternate modification. FAD contacts are provided by residues 71–80 (EKNETLGGTC) and lysine 89. A disulfide bridge connects residues cysteine 80 and cysteine 85. Residues lysine 104, lysine 122, lysine 132, and lysine 143 each carry the N6-acetyllysine; alternate modification. N6-succinyllysine; alternate is present on residues lysine 104, lysine 122, lysine 132, and lysine 143. Glycine 154 contributes to the FAD binding site. An N6-succinyllysine mark is found at lysine 159 and lysine 166. 183–185 (TGS) provides a ligand contact to FAD. NAD(+) contacts are provided by residues 220–227 (GAGVIGVE) and glutamate 243. 2 positions are modified to N6-succinyllysine: lysine 273 and lysine 277. Valine 278 is an NAD(+) binding site. 2 positions are modified to phosphoserine: serine 285 and serine 297. Glycine 314 contacts NAD(+). An N6-acetyllysine; alternate modification is found at lysine 334. Lysine 334 carries the N6-succinyllysine; alternate modification. Residue lysine 346 is modified to N6-acetyllysine. FAD is bound by residues aspartate 355 and 361–364 (MLAH). Residue lysine 410 is modified to N6-acetyllysine; alternate. N6-succinyllysine; alternate is present on lysine 410. Lysine 417 and lysine 420 each carry N6-acetyllysine. The residue at position 430 (lysine 430) is an N6-succinyllysine. Histidine 487 acts as the Proton acceptor in catalysis. N6-acetyllysine; alternate is present on lysine 505. Lysine 505 carries the N6-succinyllysine; alternate modification.

The protein belongs to the class-I pyridine nucleotide-disulfide oxidoreductase family. As to quaternary structure, homodimer. Part of the multimeric pyruvate dehydrogenase complex that contains multiple copies of pyruvate dehydrogenase (subunits PDHA (PDHA1 or PDHA2) and PDHB, E1), dihydrolipoamide acetyltransferase (DLAT, E2) and lipoamide dehydrogenase (DLD, E3). These subunits are bound to an inner core composed of about 48 DLAT and 12 PDHX molecules (by non covalent bonds). The 2-oxoglutarate dehydrogenase complex is composed of OGDH (2-oxoglutarate dehydrogenase; E1), DLST (dihydrolipoamide succinyltransferase; E2), DLD (dihydrolipoamide dehydrogenase; E3) and the assembly factor KGD4. It contains multiple copies of the three enzymatic components (E1, E2 and E3). In the nucleus, the 2-oxoglutarate dehydrogenase complex associates with KAT2A. Interacts with PDHX. FAD is required as a cofactor. Post-translationally, tyrosine phosphorylated. As to expression, expressed in liver (at protein level).

The protein resides in the mitochondrion matrix. The protein localises to the nucleus. It localises to the cell projection. It is found in the cilium. Its subcellular location is the flagellum. The protein resides in the cytoplasmic vesicle. The protein localises to the secretory vesicle. It localises to the acrosome. The enzyme catalyses N(6)-[(R)-dihydrolipoyl]-L-lysyl-[protein] + NAD(+) = N(6)-[(R)-lipoyl]-L-lysyl-[protein] + NADH + H(+). Its function is as follows. Lipoamide dehydrogenase is a component of the glycine cleavage system as well as an E3 component of three alpha-ketoacid dehydrogenase complexes (pyruvate-, alpha-ketoglutarate-, and branched-chain amino acid-dehydrogenase complex). The 2-oxoglutarate dehydrogenase complex is mainly active in the mitochondrion. A fraction of the 2-oxoglutarate dehydrogenase complex also localizes in the nucleus and is required for lysine succinylation of histones: associates with KAT2A on chromatin and provides succinyl-CoA to histone succinyltransferase KAT2A. In monomeric form may have additional moonlighting function as serine protease. Involved in the hyperactivation of spermatazoa during capacitation and in the spermatazoal acrosome reaction. The polypeptide is Dihydrolipoyl dehydrogenase, mitochondrial (Dld) (Mus musculus (Mouse)).